The following is a 345-amino-acid chain: MTTTITITRPDDWHLHLRDGAALSAVLPDSARRFGRAIVMPNLRPPVTTTALAYAYRERIMQAMPAGSGFEPLMTLYLTDNTSAEEIDRAKASGIVHGVKLYPAGATTNSDSGVTNIGHCVKALEAMEKHGIPLLVHAEVTDVDVDVFDRERVFIERNMVPLLERFQGLRVVFEHITTKDAANFVAGAPENVAATITAHHLLMNRNAMFNGGIRPHHYCLPVLKREEHRLALVAAATSGNPKFFLGTDSAPHAKSAKEAACGCAGMYTAHAGIELYTEVFDAAGSLDRLEAFASFHGPDFYRLPRNTDKITLEKTAWEVPASLPFAGDELVPLRAGSHISWRLKD.

The Zn(2+) site is built by His14 and His16. Substrate contacts are provided by residues 16–18 and Asn42; that span reads HLR. The Zn(2+) site is built by Lys100, His137, and His175. An N6-carboxylysine modification is found at Lys100. His137 is a substrate binding site. Residue Leu220 coordinates substrate. A Zn(2+)-binding site is contributed by Asp248. Residue Asp248 is part of the active site. Residues His252 and Ala264 each contribute to the substrate site.

The protein belongs to the metallo-dependent hydrolases superfamily. DHOase family. Class II DHOase subfamily. Homodimer. Requires Zn(2+) as cofactor.

The enzyme catalyses (S)-dihydroorotate + H2O = N-carbamoyl-L-aspartate + H(+). It functions in the pathway pyrimidine metabolism; UMP biosynthesis via de novo pathway; (S)-dihydroorotate from bicarbonate: step 3/3. Functionally, catalyzes the reversible cyclization of carbamoyl aspartate to dihydroorotate. The protein is Dihydroorotase of Methylobacillus flagellatus (strain ATCC 51484 / DSM 6875 / VKM B-1610 / KT).